The chain runs to 250 residues: MKVDLNADAGESYGAFAYGHDREIFPLVTSANLACGFHGGSPGRILEAVRLAKAHGVAVGAHPGFPDLVGFGRREMALSPEEVYADVLYQIGALSAFLKAEGLPLHHVKPHGALYLKACRDRETARAIALAVKAFDPGLPLVVLPGTVYEEEARKAGLRVVLEAFPERAYLRNGQLAPRSMPGSWITDPEEAARRALRMVLEGKVEALDGGEVAVRAETLCIHGDNPNAPEVARAVREALEQAGVEVRAF.

This sequence belongs to the LamB/PxpA family. Forms a complex composed of PxpA, PxpB and PxpC.

The catalysed reaction is 5-oxo-L-proline + ATP + 2 H2O = L-glutamate + ADP + phosphate + H(+). Catalyzes the cleavage of 5-oxoproline to form L-glutamate coupled to the hydrolysis of ATP to ADP and inorganic phosphate. This chain is 5-oxoprolinase subunit A, found in Thermus thermophilus (strain ATCC BAA-163 / DSM 7039 / HB27).